Reading from the N-terminus, the 830-residue chain is Isethionate sulfite-lyase (830 aa).

Residues Lys31–Val700 form the PFL domain. Residues Arg189, Gln193, Cys468 to Glu470, and Arg678 contribute to the 2-hydroxyethane-1-sulfonate site. Cys468 (cysteine radical intermediate) is an active-site residue. The active-site Proton acceptor is Glu470. In terms of domain architecture, Glycine radical spans Asp707–Met830. Gly805 bears the Glycine radical mark.

This sequence belongs to the glycyl radical enzyme (GRE) family. In terms of assembly, homodimer. In terms of processing, requires the activating protein IslB to generate the key active site glycyl radical on Gly-805 that is involved in catalysis.

It carries out the reaction 2-hydroxyethane-1-sulfonate = acetaldehyde + sulfite + H(+). The protein operates within organosulfur degradation; alkanesulfonate degradation. Functionally, involved in an anaerobic respiration pathway that converts the sulfonate taurine (2-aminoethanesulfonate) to ammonia, acetate and sulfide. Catalyzes the radical-mediated C-S bond cleavage of isethionate (2-hydroxyethanesulfonate) to form sulfite and acetaldehyde. Is not able to use any alternate organosulfonate or (S)-1,2-propanediol or choline as a substrate, showing that this enzyme is highly specific for isethionate. The polypeptide is Isethionate sulfite-lyase (Bilophila wadsworthia (strain 3_1_6)).